The sequence spans 265 residues: MADS-box protein JOINTLESS (265 aa).

The MADS-box domain occupies 3–57; the sequence is REKIQIKKIDNSTARQVTFSKRRRGLFKKAEELSVLCDADVALIIFSSTGKLFDY. The region spanning 87–177 is the K-box domain; that stretch reads QLVENSNYSR…RQQVMEISNN (91 aa). The segment at 196–232 is disordered; the sequence is ENGFNNNNNEDGQSSESVTNPCNSIDPPPQDDDSSDT. Residues 205-218 are compositionally biased toward polar residues; the sequence is EDGQSSESVTNPCN.

In terms of tissue distribution, widely expressed with highest levels in shoot tips and axillary buds. Also found in fully developed pedicels and flowers.

The protein localises to the nucleus. In terms of biological role, putative transcription factor that coordinates gene expression underlying the differentiation of the pedicel abscission zone. May also be involved in the maintenance of the inflorescence meristem state. In Solanum lycopersicum (Tomato), this protein is MADS-box protein JOINTLESS (J).